The primary structure comprises 337 residues: GDP-fucose transporter, Golgi (337 aa).

A run of 8 helical transmembrane segments spans residues 13 to 35, 45 to 67, 95 to 117, 121 to 140, 145 to 163, 173 to 192, 205 to 227, and 242 to 264; these read NKYL…TVFV, VNLG…ICFV, ILPL…SYVT, YYIG…YVIL, SFKC…WLGV, SWRG…MFSI, VWLL…IIIN, and SWFW…VTAL.

Belongs to the TPT transporter family. SLC35C subfamily.

It localises to the golgi apparatus membrane. Functionally, involved in GDP-fucose import from the cytoplasm into the Golgi lumen. Plays a major role in the fucosylation of N-glycans. Functions redundantly with Efr in the O-fucosylation of Notch, positively regulating Notch signaling. The polypeptide is GDP-fucose transporter, Golgi (Drosophila melanogaster (Fruit fly)).